Here is a 529-residue protein sequence, read N- to C-terminus: Pheophorbide a oxygenase, chloroplastic (529 aa).

2 disordered regions span residues Met1–Pro24 and Leu46–Ala72. The N-terminal 47 residues, Met1 to Arg47, are a transit peptide targeting the chloroplast. The 113-residue stretch at Trp82–Val194 folds into the Rieske domain. [2Fe-2S] cluster is bound by residues Cys124, His126, Cys144, and His147.

The cofactor is [2Fe-2S] cluster. In terms of tissue distribution, expressed in leaves. Expressed at low levels in roots, stems, panicles and seeds.

It is found in the plastid. The protein localises to the chloroplast. It carries out the reaction pheophorbide a + 2 reduced [2Fe-2S]-[ferredoxin] + O2 + 2 H(+) = red chlorophyll catabolite + 2 oxidized [2Fe-2S]-[ferredoxin]. Its pathway is porphyrin-containing compound metabolism; chlorophyll degradation. Its function is as follows. Catalyzes the key reaction of chlorophyll catabolism, porphyrin macrocycle cleavage of pheophorbide a (pheide a) to a primary fluorescent catabolite (pFCC). Works in a two-step reaction with red chlorophyll catabolite reductase (RCCR). Creates the intermediate RCC through the opening of the porphyrin macrocycle by the introduction of one atom of molecular oxygen at the alpha-methine bridge. Seems to be specific for pheide a. Belongs to the chlorophyll catabolic enzymes (CCEs). May play a role in senescence and response to wounding. In Oryza sativa subsp. japonica (Rice), this protein is Pheophorbide a oxygenase, chloroplastic.